Reading from the N-terminus, the 236-residue chain is Small ribosomal subunit protein uS2c (236 aa).

The protein belongs to the universal ribosomal protein uS2 family.

The protein localises to the plastid. The protein resides in the chloroplast. This chain is Small ribosomal subunit protein uS2c (rps2), found in Nymphaea alba (White water-lily).